A 123-amino-acid polypeptide reads, in one-letter code: Small ribosomal subunit protein uS12c (123 aa).

Belongs to the universal ribosomal protein uS12 family. Part of the 30S ribosomal subunit.

It localises to the plastid. Its subcellular location is the chloroplast. Functionally, with S4 and S5 plays an important role in translational accuracy. Located at the interface of the 30S and 50S subunits. The polypeptide is Small ribosomal subunit protein uS12c (rps12) (Chlorokybus atmophyticus (Soil alga)).